The following is a 362-amino-acid chain: Peptide chain release factor 1 (362 aa).

Gln-235 carries the post-translational modification N5-methylglutamine.

The protein belongs to the prokaryotic/mitochondrial release factor family. Post-translationally, methylated by PrmC. Methylation increases the termination efficiency of RF1.

Its subcellular location is the cytoplasm. Its function is as follows. Peptide chain release factor 1 directs the termination of translation in response to the peptide chain termination codons UAG and UAA. This Buchnera aphidicola subsp. Baizongia pistaciae (strain Bp) protein is Peptide chain release factor 1.